The chain runs to 163 residues: MGNCAKRPRHRAPKDRELRPEEIEELQAAFQEFDRDRDGYIGYQELGACMRTLGYMPTEMELIEISQQISGGKVDFEDFVELMGPKLLAETADMIGVRELRDAFREFDTNGDGCISLGELRAALKALLGERLSQREVDEILRDIDLNGDGLVDFEEFVRMMSR.

G2 carries N-myristoyl glycine lipidation. EF-hand domains follow at residues 21-56 (EEIEELQAAFQEFDRDRDGYIGYQELGACMRTLGYM), 72-89 (GKVDFEDFVELMGPKLLA), 95-130 (IGVRELRDAFREFDTNGDGCISLGELRAALKALLGE), and 132-163 (LSQREVDEILRDIDLNGDGLVDFEEFVRMMSR). Ca(2+) contacts are provided by D34, D36, D38, Y40, and E45. 9 residues coordinate Ca(2+): D108, N110, D112, C114, E119, D145, N147, D149, and E156.

The protein localises to the cytoplasm. It is found in the perinuclear region. It localises to the cell membrane. Its subcellular location is the golgi apparatus. Functionally, required for sound encoding at inner hair cells (IHCs) synapses, likely via inhibition of the inactivation of voltage-gated calcium channel of type 1.3 (Cav1.3) in the IHCs. Required for the normal transfer of light signals through the retina. The protein is Calcium-binding protein 2 (CABP2) of Bos taurus (Bovine).